Consider the following 234-residue polypeptide: Uridylate kinase (234 aa).

Residue 9 to 12 coordinates ATP; it reads KLSG. Gly51 is a UMP binding site. 2 residues coordinate ATP: Gly52 and Arg56. UMP contacts are provided by residues Asp71 and 132–139; that span reads CGNPFFTT. Positions 159, 165, and 168 each coordinate ATP.

Belongs to the UMP kinase family. In terms of assembly, homohexamer.

The protein resides in the cytoplasm. The catalysed reaction is UMP + ATP = UDP + ADP. It functions in the pathway pyrimidine metabolism; CTP biosynthesis via de novo pathway; UDP from UMP (UMPK route): step 1/1. With respect to regulation, inhibited by UTP. Its function is as follows. Catalyzes the reversible phosphorylation of UMP to UDP. The protein is Uridylate kinase of Prochlorococcus marinus (strain MIT 9515).